Reading from the N-terminus, the 155-residue chain is Ribosome maturation factor RimP (155 aa).

It belongs to the RimP family.

It localises to the cytoplasm. In terms of biological role, required for maturation of 30S ribosomal subunits. In Parabacteroides distasonis (strain ATCC 8503 / DSM 20701 / CIP 104284 / JCM 5825 / NCTC 11152), this protein is Ribosome maturation factor RimP.